Here is a 918-residue protein sequence, read N- to C-terminus: Isoleucine--tRNA ligase (918 aa).

The 'HIGH' region signature appears at 59–69 (PYANGHLHIGH). E570 serves as a coordination point for L-isoleucyl-5'-AMP. The short motif at 611–615 (KMSKS) is the 'KMSKS' region element. K614 lines the ATP pocket. C893, C896, C908, and C911 together coordinate Zn(2+).

It belongs to the class-I aminoacyl-tRNA synthetase family. IleS type 1 subfamily. In terms of assembly, monomer. Zn(2+) serves as cofactor.

It is found in the cytoplasm. It carries out the reaction tRNA(Ile) + L-isoleucine + ATP = L-isoleucyl-tRNA(Ile) + AMP + diphosphate. Catalyzes the attachment of isoleucine to tRNA(Ile). As IleRS can inadvertently accommodate and process structurally similar amino acids such as valine, to avoid such errors it has two additional distinct tRNA(Ile)-dependent editing activities. One activity is designated as 'pretransfer' editing and involves the hydrolysis of activated Val-AMP. The other activity is designated 'posttransfer' editing and involves deacylation of mischarged Val-tRNA(Ile). The protein is Isoleucine--tRNA ligase of Campylobacter concisus (strain 13826).